A 503-amino-acid chain; its full sequence is Cysteine--tRNA ligase (503 aa).

C31 lines the Zn(2+) pocket. Residues 33-43 (PTVYDYAHIGN) carry the 'HIGH' region motif. Residues C225, H264, and E268 each contribute to the Zn(2+) site. The short motif at 297–301 (KMSKS) is the 'KMSKS' region element. Residue K300 coordinates ATP.

The protein belongs to the class-I aminoacyl-tRNA synthetase family. Monomer. It depends on Zn(2+) as a cofactor.

It is found in the cytoplasm. It catalyses the reaction tRNA(Cys) + L-cysteine + ATP = L-cysteinyl-tRNA(Cys) + AMP + diphosphate. The sequence is that of Cysteine--tRNA ligase from Bartonella tribocorum (strain CIP 105476 / IBS 506).